The sequence spans 364 residues: Probable dual-specificity RNA methyltransferase RlmN (364 aa).

Residue glutamate 107 is the Proton acceptor of the active site. In terms of domain architecture, Radical SAM core spans 113-346; that stretch reads HDYGNSVCVT…ATIRREQGSD (234 aa). The cysteines at positions 120 and 351 are disulfide-linked. The [4Fe-4S] cluster site is built by cysteine 127, cysteine 131, and cysteine 134. S-adenosyl-L-methionine-binding positions include 177 to 178, serine 209, 232 to 234, and asparagine 308; these read GE and SLH. The S-methylcysteine intermediate role is filled by cysteine 351.

It belongs to the radical SAM superfamily. RlmN family. It depends on [4Fe-4S] cluster as a cofactor.

It localises to the cytoplasm. It catalyses the reaction adenosine(2503) in 23S rRNA + 2 reduced [2Fe-2S]-[ferredoxin] + 2 S-adenosyl-L-methionine = 2-methyladenosine(2503) in 23S rRNA + 5'-deoxyadenosine + L-methionine + 2 oxidized [2Fe-2S]-[ferredoxin] + S-adenosyl-L-homocysteine. The catalysed reaction is adenosine(37) in tRNA + 2 reduced [2Fe-2S]-[ferredoxin] + 2 S-adenosyl-L-methionine = 2-methyladenosine(37) in tRNA + 5'-deoxyadenosine + L-methionine + 2 oxidized [2Fe-2S]-[ferredoxin] + S-adenosyl-L-homocysteine. Its function is as follows. Specifically methylates position 2 of adenine 2503 in 23S rRNA and position 2 of adenine 37 in tRNAs. Confers resistance to some classes of antibiotics. The protein is Probable dual-specificity RNA methyltransferase RlmN of Staphylococcus aureus (strain MW2).